The chain runs to 501 residues: Inactive cytidine monophosphate-N-acetylneuraminic acid hydroxylase (501 aa).

This sequence belongs to the CMP-Neu5Ac hydroxylase family. Widely expressed. Highly expressed in thymus. Not expressed in brain. May be expressed in adult stem cells (at protein level).

Its subcellular location is the cytoplasm. In terms of biological role, sialic acids are components of carbohydrate chains of glycoconjugates and are involved in cell-cell recognition and cell-pathogen interactions. That protein has no CMP-N-acetylneuraminate monooxygenase activity and is not able to convert CMP-N-acetylneuraminic acid (CMP-Neu5Ac) into its hydroxylated derivative CMP-N-glycolylneuraminic acid (CMP-Neu5Gc), a sialic acid abundantly expressed at the surface of many cells in vertebrates. However, it may play a role in Wnt signaling. The polypeptide is Inactive cytidine monophosphate-N-acetylneuraminic acid hydroxylase (CMAHP) (Homo sapiens (Human)).